The chain runs to 388 residues: DNA replication and repair protein RecF (388 aa).

30–37 (GANGNGKT) lines the ATP pocket.

The protein belongs to the RecF family.

The protein localises to the cytoplasm. Functionally, the RecF protein is involved in DNA metabolism; it is required for DNA replication and normal SOS inducibility. RecF binds preferentially to single-stranded, linear DNA. It also seems to bind ATP. This is DNA replication and repair protein RecF from Nocardia farcinica (strain IFM 10152).